Consider the following 246-residue polypeptide: MSKNNRKSPSESATLFKVGTIATGNDKNKWIVKETSNGVKRWTKFIPNSNIKIRNNELVSFNFNFIEKLFPKQTKHIGDIFINSNKIGVGELLFWPMNTQKGLYNIFNLKGCLIAVHNNVSLFDQKFTISDKFADCDIGMFSFNDYVNIEPYLQKNKIKKSSGFGLKFPEFSTKHFSFTGSKPNYVYLEDLEDFVDDESESVTKLNDPIAVFVDNKFGDGSFPIYVGKNAFFIMNPDVMDIMINNQ.

This is an uncharacterized protein from Acanthamoeba polyphaga (Amoeba).